Reading from the N-terminus, the 82-residue chain is MSSLYFAILCLFMIFLVPLHEFGNAQGSEAELQLDPSMCLRVECAKHRNQKWCFCCAGLPRTCFLDKRGCTSVCKRESPSMA.

The N-terminal stretch at 1-22 (MSSLYFAILCLFMIFLVPLHEF) is a signal peptide. 4 cysteine pairs are disulfide-bonded: cysteine 39–cysteine 55, cysteine 44–cysteine 74, cysteine 53–cysteine 70, and cysteine 56–cysteine 63.

Belongs to the MEG family. As to expression, expressed in stems, leaves and flowers.

In Arabidopsis thaliana (Mouse-ear cress), this protein is EMBRYO SURROUNDING FACTOR 1-like protein 10 (ESFL10).